The primary structure comprises 104 residues: Small ribosomal subunit protein uS10 (104 aa).

This sequence belongs to the universal ribosomal protein uS10 family. In terms of assembly, part of the 30S ribosomal subunit.

Involved in the binding of tRNA to the ribosomes. The polypeptide is Small ribosomal subunit protein uS10 (Dichelobacter nodosus (strain VCS1703A)).